The primary structure comprises 538 residues: Atos homolog protein B (538 aa).

Disordered stretches follow at residues 1-99, 165-185, and 199-270; these read MRHV…PSTV, QGGQGCLGETPGPAPSGQLHT, and KSPV…GTLG. Over residues 227–238 the composition is skewed to pro residues; the sequence is HTPPGPGPPGPC. Phosphoserine occurs at positions 254 and 255. The tract at residues 348-430 is required for macropage invasion; that stretch reads LLGNFEESLL…VPKVGTIQVT (83 aa). The interval 436-444 is transactivation domain 1 (TAD1); that stretch reads QTVVKMFLV.

It belongs to the ATOS family.

The protein localises to the nucleus. In terms of biological role, transcription regulator that syncronizes transcriptional and translational programs to promote macrophage invasion of tissues. In Mus musculus (Mouse), this protein is Atos homolog protein B.